A 474-amino-acid polypeptide reads, in one-letter code: MSYTKTQAKAGYQAGVKDYRLTYYTPDYTPKDTDVLAAFRVTPQPGVPIEEAGAAVAAESSTGTWTTVWTDGLTELDRYKGRCYDIEPVPGEDNQWICYIAYPLDLFEEGSVTNVLTSLVGNVFGFKALRALRLEDIRFPIALVKTYQGPPHGIVVERDKINKYGRPLLGCTIKPKLGLSAKNYGRAVYECLRGGLDFTKDDENINSQPFMRWRDRFLFVQDAIVKSQAETGEIKGHYLNCTAGTCEEMMERAEFAKELKTPIIMHDYLTGGFTANTTLAKWCRRNGILLHIHRAMHAVIDRQKNHGIHFRVLAKCLRLSGGDHIHTGTVVGKLEGERASTMGFVDLLREEHVERDLSRGIYFTQDWASMPGVMAVASGGIHVWHMPALLDIFGDDAVLQFGGGTLGHPWGNAPGATANRVALEACVKARNEGRDLMREAGDIIREAARWSPELAAACELWKEIKFEYEAVDKL.

Residues N122 and T172 each coordinate substrate. The active-site Proton acceptor is K174. Residue K176 participates in substrate binding. Positions 200, 202, and 203 each coordinate Mg(2+). K200 carries the N6-carboxylysine modification. The active-site Proton acceptor is the H293. Residues R294, H326, and S378 each contribute to the substrate site.

The protein belongs to the RuBisCO large chain family. Type I subfamily. In terms of assembly, heterohexadecamer of 8 large chains and 8 small chains; disulfide-linked. The disulfide link is formed within the large subunit homodimers. Mg(2+) is required as a cofactor. Post-translationally, the disulfide bond which can form in the large chain dimeric partners within the hexadecamer appears to be associated with oxidative stress and protein turnover.

The protein localises to the carboxysome. It catalyses the reaction 2 (2R)-3-phosphoglycerate + 2 H(+) = D-ribulose 1,5-bisphosphate + CO2 + H2O. The catalysed reaction is D-ribulose 1,5-bisphosphate + O2 = 2-phosphoglycolate + (2R)-3-phosphoglycerate + 2 H(+). Functionally, ruBisCO catalyzes two reactions: the carboxylation of D-ribulose 1,5-bisphosphate, the primary event in carbon dioxide fixation, as well as the oxidative fragmentation of the pentose substrate in the photorespiration process. Both reactions occur simultaneously and in competition at the same active site. This Gloeobacter violaceus (strain ATCC 29082 / PCC 7421) protein is Ribulose bisphosphate carboxylase large chain.